The following is a 196-amino-acid chain: MLERIKVCFTESIQTQIAAAEALPDAISRAAMTLVHSLLNGNKILCCGNGTSAANAQHFAASMINRFETERPSLPAIALNTDNVVLTAIANDRLHDEVYAKQVRALGHAGDVLLAISTRGNSRDIVKAVEAAVTRDMTIVALTGYDGGELAGLLGPQDVEIRIPSHHSARIQEMHMLTVNCLCDLIDNTLFLHQDD.

Residues 34–196 (LVHSLLNGNK…DNTLFLHQDD (163 aa)) enclose the SIS domain.

This sequence belongs to the SIS family. DiaA subfamily. In terms of assembly, homotetramer; dimer of dimers.

Functionally, required for the timely initiation of chromosomal replication via direct interactions with the DnaA initiator protein. The sequence is that of DnaA initiator-associating protein DiaA from Salmonella paratyphi A (strain ATCC 9150 / SARB42).